Consider the following 386-residue polypeptide: DNA-directed RNA polymerase subunit Rpo1C (386 aa).

It belongs to the RNA polymerase beta' chain family. Part of the RNA polymerase complex.

It is found in the cytoplasm. It carries out the reaction RNA(n) + a ribonucleoside 5'-triphosphate = RNA(n+1) + diphosphate. Functionally, DNA-dependent RNA polymerase (RNAP) catalyzes the transcription of DNA into RNA using the four ribonucleoside triphosphates as substrates. Forms part of the jaw domain. The protein is DNA-directed RNA polymerase subunit Rpo1C of Methanococcus maripaludis (strain C5 / ATCC BAA-1333).